A 90-amino-acid polypeptide reads, in one-letter code: Small ribosomal subunit protein uS15c (90 aa).

The protein belongs to the universal ribosomal protein uS15 family. Part of the 30S ribosomal subunit.

The protein localises to the plastid. Its subcellular location is the chloroplast. The sequence is that of Small ribosomal subunit protein uS15c (rps15) from Lotus japonicus (Lotus corniculatus var. japonicus).